The following is a 219-amino-acid chain: Probable transcriptional regulator flp (219 aa).

Residues 144 to 212 enclose the HTH crp-type domain; the sequence is DSINVRLTHY…GKQVRILNAE (69 aa). Residues 191 to 210 constitute a DNA-binding region (H-T-H motif); that stretch reads KRLAEEKLIERSGKQVRILN.

This Lacticaseibacillus casei (Lactobacillus casei) protein is Probable transcriptional regulator flp (flp).